The sequence spans 520 residues: Glycosyl hydrolase family 109 protein 5 (520 aa).

The first 27 residues, 1–27 (MRTFKSLMISLCMGTTLCMCLPQTTTA), serve as a signal peptide directing secretion. NAD(+) contacts are provided by residues 77-78 (MR), Asp-99, 147-150 (WLHH), 167-168 (EV), and Asn-196. Substrate-binding positions include Tyr-225, Arg-248, 260-263 (YATH), and Tyr-338. Tyr-260 provides a ligand contact to NAD(+).

It belongs to the Gfo/Idh/MocA family. Glycosyl hydrolase 109 subfamily. The cofactor is NAD(+).

Functionally, glycosidase. This is Glycosyl hydrolase family 109 protein 5 from Phocaeicola vulgatus (strain ATCC 8482 / DSM 1447 / JCM 5826 / CCUG 4940 / NBRC 14291 / NCTC 11154) (Bacteroides vulgatus).